The primary structure comprises 150 residues: UPF0178 protein Daro_2879 (150 aa).

The protein belongs to the UPF0178 family.

In Dechloromonas aromatica (strain RCB), this protein is UPF0178 protein Daro_2879.